The sequence spans 213 residues: Cell wall protein PGA62 (213 aa).

Residues 1–18 form the signal peptide; it reads MQFSSAVVLSAVAGSALA. N-linked (GlcNAc...) asparagine glycosylation occurs at Asn-22. The interval 120 to 194 is disordered; that stretch reads CPLPSTEAPG…APAVSTAEAG (75 aa). A compositionally biased stretch (polar residues) spans 145–172; sequence PVPTTAAESSPAKTTAAESSPAQETTPK. A compositionally biased stretch (low complexity) spans 173-194; that stretch reads TVAAESSSAETTAPAVSTAEAG. Gly-194 carries GPI-anchor amidated glycine lipidation. A propeptide spans 195–213 (removed in mature form); it reads AAANAVPVAAGLLALAALF.

Belongs to the HWP1 family. Post-translationally, N- and O-glycosylated. In terms of processing, the GPI-anchor is attached to the protein in the endoplasmic reticulum and serves to target the protein to the cell surface. There, the glucosamine-inositol phospholipid moiety is cleaved off and the GPI-modified mannoprotein is covalently attached via its lipidless GPI glycan remnant to the 1,6-beta-glucan of the outer cell wall layer.

The protein localises to the secreted. The protein resides in the cell wall. Its subcellular location is the membrane. Its function is as follows. Cell wall protein necessary for cell wall integrity. Plays only a minor role in hyphal morphogenesis and is not critical to biofilm formation. The polypeptide is Cell wall protein PGA62 (PGA62) (Candida albicans (strain SC5314 / ATCC MYA-2876) (Yeast)).